The sequence spans 467 residues: Uronate isomerase (467 aa).

The protein belongs to the metallo-dependent hydrolases superfamily. Uronate isomerase family.

The enzyme catalyses D-glucuronate = D-fructuronate. It carries out the reaction aldehydo-D-galacturonate = keto-D-tagaturonate. Its pathway is carbohydrate metabolism; pentose and glucuronate interconversion. This is Uronate isomerase from Actinobacillus succinogenes (strain ATCC 55618 / DSM 22257 / CCUG 43843 / 130Z).